Reading from the N-terminus, the 174-residue chain is Protein HdcB (174 aa).

The chain is Protein HdcB (hdcB) from Lactobacillus sp. (strain 30a).